We begin with the raw amino-acid sequence, 185 residues long: Urease accessory protein UreE (185 aa).

Residues Leu153–His185 form a disordered region. Residues Gly162–His175 are compositionally biased toward basic residues. Positions His176–His185 are enriched in basic and acidic residues.

This sequence belongs to the UreE family.

The protein localises to the cytoplasm. Involved in urease metallocenter assembly. Binds nickel. Probably functions as a nickel donor during metallocenter assembly. The sequence is that of Urease accessory protein UreE from Haemophilus influenzae (strain PittEE).